We begin with the raw amino-acid sequence, 159 residues long: Phosphopantetheine adenylyltransferase (159 aa).

Ser-8 contributes to the substrate binding site. ATP contacts are provided by residues 8–9 (SF) and His-16. Substrate is bound by residues Lys-40, Leu-73, and Lys-87. Residues 88-90 (GLR), Glu-98, and 122-128 (YGYVSST) each bind ATP.

Belongs to the bacterial CoaD family. As to quaternary structure, homohexamer. It depends on Mg(2+) as a cofactor.

It is found in the cytoplasm. It catalyses the reaction (R)-4'-phosphopantetheine + ATP + H(+) = 3'-dephospho-CoA + diphosphate. It participates in cofactor biosynthesis; coenzyme A biosynthesis; CoA from (R)-pantothenate: step 4/5. Reversibly transfers an adenylyl group from ATP to 4'-phosphopantetheine, yielding dephospho-CoA (dPCoA) and pyrophosphate. The protein is Phosphopantetheine adenylyltransferase of Corynebacterium efficiens (strain DSM 44549 / YS-314 / AJ 12310 / JCM 11189 / NBRC 100395).